The following is a 194-amino-acid chain: Small ribosomal subunit protein uS7 (194 aa).

This sequence belongs to the universal ribosomal protein uS7 family. As to quaternary structure, part of the 30S ribosomal subunit.

One of the primary rRNA binding proteins, it binds directly to 16S rRNA where it nucleates assembly of the head domain of the 30S subunit. Is located at the subunit interface close to the decoding center. The protein is Small ribosomal subunit protein uS7 of Methanospirillum hungatei JF-1 (strain ATCC 27890 / DSM 864 / NBRC 100397 / JF-1).